The primary structure comprises 261 residues: Protein unc-50 homolog (261 aa).

6 helical membrane-spanning segments follow: residues 37–57 (IFHY…YLCF), 82–102 (AFAV…AITF), 113–133 (VMFW…ATIG), 166–186 (SFFP…PILL), 190–210 (LFAA…YYYV), and 225–245 (VVFL…VVMG).

This sequence belongs to the unc-50 family.

The protein resides in the membrane. In Dictyostelium discoideum (Social amoeba), this protein is Protein unc-50 homolog.